We begin with the raw amino-acid sequence, 263 residues long: 3-methyl-2-oxobutanoate hydroxymethyltransferase (263 aa).

The Mg(2+) site is built by Asp-44 and Asp-83. 3-methyl-2-oxobutanoate-binding positions include 44-45 (DS), Asp-83, and Lys-113. Residue Glu-115 participates in Mg(2+) binding. Catalysis depends on Glu-183, which acts as the Proton acceptor.

Belongs to the PanB family. Homodecamer; pentamer of dimers. The cofactor is Mg(2+).

The protein resides in the cytoplasm. The catalysed reaction is 3-methyl-2-oxobutanoate + (6R)-5,10-methylene-5,6,7,8-tetrahydrofolate + H2O = 2-dehydropantoate + (6S)-5,6,7,8-tetrahydrofolate. The protein operates within cofactor biosynthesis; (R)-pantothenate biosynthesis; (R)-pantoate from 3-methyl-2-oxobutanoate: step 1/2. Catalyzes the reversible reaction in which hydroxymethyl group from 5,10-methylenetetrahydrofolate is transferred onto alpha-ketoisovalerate to form ketopantoate. The sequence is that of 3-methyl-2-oxobutanoate hydroxymethyltransferase from Trichodesmium erythraeum (strain IMS101).